Consider the following 564-residue polypeptide: Lamassu protein LmuB (564 aa).

Component of antiviral defense system Lamassu type II, composed of LmuA and LmuB. Expression of Lamassu type II in B.subtilis (strain BEST7003) confers resistance to phage SpBeta. May be an ATPase. The polypeptide is Lamassu protein LmuB (Bacillus cereus (strain VD014)).